Reading from the N-terminus, the 334-residue chain is Cell division protein ZipA (334 aa).

Residues 1–2 are Periplasmic-facing; that stretch reads ME. Residues 3–23 form a helical membrane-spanning segment; sequence LHIIFLILGGLLIVLLAGFSI. Residues 24 to 334 lie on the Cytoplasmic side of the membrane; it reads YSARREKSRI…DRQAYFARVS (311 aa).

Belongs to the ZipA family. In terms of assembly, interacts with FtsZ via their C-terminal domains.

It localises to the cell inner membrane. Essential cell division protein that stabilizes the FtsZ protofilaments by cross-linking them and that serves as a cytoplasmic membrane anchor for the Z ring. Also required for the recruitment to the septal ring of downstream cell division proteins. The protein is Cell division protein ZipA of Haemophilus ducreyi (strain 35000HP / ATCC 700724).